The primary structure comprises 475 residues: Ammonium transporter 2 (475 aa).

11 consecutive transmembrane segments (helical) span residues 27–47 (AATL…ASIV), 55–75 (SAFM…LLCY), 120–140 (LVYF…GSVL), 148–168 (WMAF…YSIW), 183–203 (GGYV…YWVG), 218–238 (VLLM…FNGG), 254–274 (TNLS…IFFG), 279–299 (IGAI…AGLI), 302–322 (WAAI…MMII), 336–356 (LAVF…TGLF), and 389–409 (AGAA…LLAI).

This sequence belongs to the ammonia transporter channel (TC 1.A.11.2) family. As to expression, higher expression in shoots than roots.

Its subcellular location is the cell membrane. Its function is as follows. High affinity ammonium transporter that may play an important role in moving ammonium between the apoplast and symplast of cells throughout the plant. Does not transport methylammonium. The chain is Ammonium transporter 2 (AMT2) from Arabidopsis thaliana (Mouse-ear cress).